The chain runs to 712 residues: Amino-acid acetyltransferase, mitochondrial (712 aa).

The transit peptide at 1–47 (MFVRTCRSSCNAWTNATSTTQAGSLLPPNAHRSVVLTLSLQACSART) directs the protein to the mitochondrion. The disordered stretch occupies residues 55-99 (FASTTSQSKRQEAEAEEKRQVSPRLGPSAPRSSYPSSAEARQKRD). The span at 63–74 (KRQEAEAEEKRQ) shows a compositional bias: basic and acidic residues. Positions 81-93 (PSAPRSSYPSSAE) are enriched in low complexity. One can recognise an N-acetyltransferase domain in the interval 534–702 (GVPRLRLTDT…YEDVCRNIAP (169 aa)).

It belongs to the acetyltransferase family.

The protein localises to the mitochondrion. It catalyses the reaction L-glutamate + acetyl-CoA = N-acetyl-L-glutamate + CoA + H(+). It functions in the pathway amino-acid biosynthesis; L-arginine biosynthesis; N(2)-acetyl-L-ornithine from L-glutamate: step 1/4. Inhibited by arginine. Functionally, N-acetylglutamate synthase involved in arginine biosynthesis. The chain is Amino-acid acetyltransferase, mitochondrial (arg-14) from Neurospora crassa (strain ATCC 24698 / 74-OR23-1A / CBS 708.71 / DSM 1257 / FGSC 987).